The following is a 394-amino-acid chain: Phosphopentomutase (394 aa).

Asp13, Asp286, His291, Asp327, His328, and His339 together coordinate Mn(2+).

It belongs to the phosphopentomutase family. Mn(2+) is required as a cofactor.

It localises to the cytoplasm. It catalyses the reaction 2-deoxy-alpha-D-ribose 1-phosphate = 2-deoxy-D-ribose 5-phosphate. The catalysed reaction is alpha-D-ribose 1-phosphate = D-ribose 5-phosphate. The protein operates within carbohydrate degradation; 2-deoxy-D-ribose 1-phosphate degradation; D-glyceraldehyde 3-phosphate and acetaldehyde from 2-deoxy-alpha-D-ribose 1-phosphate: step 1/2. Isomerase that catalyzes the conversion of deoxy-ribose 1-phosphate (dRib-1-P) and ribose 1-phosphate (Rib-1-P) to deoxy-ribose 5-phosphate (dRib-5-P) and ribose 5-phosphate (Rib-5-P), respectively. This Bacillus thuringiensis (strain Al Hakam) protein is Phosphopentomutase.